The following is a 142-amino-acid chain: Large ribosomal subunit protein uL13 (142 aa).

Belongs to the universal ribosomal protein uL13 family. In terms of assembly, part of the 50S ribosomal subunit.

Its function is as follows. This protein is one of the early assembly proteins of the 50S ribosomal subunit, although it is not seen to bind rRNA by itself. It is important during the early stages of 50S assembly. The protein is Large ribosomal subunit protein uL13 of Janthinobacterium sp. (strain Marseille) (Minibacterium massiliensis).